The chain runs to 60 residues: Protein YoaG (60 aa).

As to quaternary structure, homodimer.

This chain is Protein YoaG (yoaG), found in Escherichia coli O157:H7.